We begin with the raw amino-acid sequence, 1166 residues long: UDP-N-acetylglucosamine transferase subunit ALG13 (1166 aa).

Residues 1–125 (MKRAFVTVGT…LHKEGHLFYC (125 aa)) form a glycosyltransferase activity region. The tract at residues 126–394 (TCRVLSCPAP…GSRRNKHHAL (269 aa)) is deubiquitinase activity. Residues 225-346 (LFRKVVAKDA…NGHYDSVYSK (122 aa)) enclose the OTU domain. Aspartate 233 serves as the catalytic For deubiquitinase activity. Cysteine 236 functions as the Nucleophile; for deubiquitinase activity in the catalytic mechanism. The active-site For deubiquitinase activity is histidine 339. The segment at 393 to 438 (ALTASVEGSSDQKSSTEDRTEEAAACSSAASTPEGNKQGTERQKVP) is disordered. Residues 486-546 (YYFLGDKCQV…RPVNQVALLP (61 aa)) form the Tudor domain. Composition is skewed to pro residues over residues 921-930 (PPPLPPPPPA), 941-957 (PLPP…PPYS), and 1004-1034 (QPQP…PPPQ). Disordered regions lie at residues 921–966 (PPPL…SDLP) and 998–1056 (QQQL…EQPL).

This sequence belongs to the glycosyltransferase 28 family. In terms of assembly, forms with ALG14 the active heterodimeric UDP-N-acetylglucosamine transferase complex. Not able to interact with ALG14 to form an active UDP-N-acetylglucosamine transferase complex.

The protein localises to the endoplasmic reticulum membrane. It catalyses the reaction an N-acetyl-alpha-D-glucosaminyl-diphospho-di-trans,poly-cis-dolichol + UDP-N-acetyl-alpha-D-glucosamine = an N,N'-diacetylchitobiosyl-diphospho-di-trans,poly-cis-dolichol + UDP + H(+). It functions in the pathway protein modification; protein glycosylation. Catalytic subunit of the UDP-N-acetylglucosamine transferase complex that operates in the biosynthetic pathway of dolichol-linked oligosaccharides, the glycan precursors employed in protein asparagine (N)-glycosylation. The assembly of dolichol-linked oligosaccharides begins on the cytosolic side of the endoplasmic reticulum membrane and finishes in its lumen. The sequential addition of sugars to dolichol pyrophosphate produces dolichol-linked oligosaccharides containing fourteen sugars, including two GlcNAcs, nine mannoses and three glucoses. Once assembled, the oligosaccharide is transferred from the lipid to nascent proteins by oligosaccharyltransferases. On the cytoplasmic face of the endoplasmic reticulum, the dimeric ALG13/ALG14 complex catalyzes the second step of dolichol pyrophosphate biosynthesis, transferring a beta1,4-linked N-acetylglucosamine (GlcNAc) from UDP-GlcNAc to GlcNAc-pyrophosphatedolichol (Gn-PDol) to produce N,N'-diacetylchitobiosyl diphosphodolichol. N,N'-diacetylchitobiosyl diphosphodolichol is a substrate for ALG1, the following enzyme in the biosynthetic pathway. Its function is as follows. No glycosyltransferase or deubiquitinase activity is detected for this potential multifunctional enzyme. The sequence is that of UDP-N-acetylglucosamine transferase subunit ALG13 from Mus musculus (Mouse).